We begin with the raw amino-acid sequence, 852 residues long: Lon protease homolog 2, peroxisomal (852 aa).

S2 carries the post-translational modification N-acetylserine. In terms of domain architecture, Lon N-terminal spans 13–222 (LPLLLTHESV…MTIPLLVRQI (210 aa)). Residue 375–382 (GPPGVGKT) participates in ATP binding. Positions 651 to 837 (LSQPGVAIGL…DEVLNAAFDG (187 aa)) constitute a Lon proteolytic domain. Active-site residues include S743 and K786. Positions 850–852 (SKL) match the Microbody targeting signal motif.

The protein belongs to the peptidase S16 family. In terms of assembly, interacts with PEX5. Interacts with TYSND1. May interact with enzymes involved in beta-oxidation of fatty acids, including ACOX1/AOX.

The protein resides in the peroxisome matrix. The catalysed reaction is Hydrolysis of proteins in presence of ATP.. In terms of biological role, ATP-dependent serine protease that mediates the selective degradation of misfolded and unassembled polypeptides in the peroxisomal matrix. Necessary for type 2 peroxisome targeting signal (PTS2)-containing protein processing and facilitates peroxisome matrix protein import. May indirectly regulate peroxisomal fatty acid beta-oxidation through degradation of the self-processed forms of TYSND1. The protein is Lon protease homolog 2, peroxisomal (Lonp2) of Rattus norvegicus (Rat).